The sequence spans 301 residues: Acetylglutamate kinase (301 aa).

Substrate-binding positions include 70–71, Arg-92, and Asn-185; that span reads GG.

This sequence belongs to the acetylglutamate kinase family. ArgB subfamily.

The protein resides in the cytoplasm. It carries out the reaction N-acetyl-L-glutamate + ATP = N-acetyl-L-glutamyl 5-phosphate + ADP. Its pathway is amino-acid biosynthesis; L-arginine biosynthesis; N(2)-acetyl-L-ornithine from L-glutamate: step 2/4. Functionally, catalyzes the ATP-dependent phosphorylation of N-acetyl-L-glutamate. In Synechococcus elongatus (strain ATCC 33912 / PCC 7942 / FACHB-805) (Anacystis nidulans R2), this protein is Acetylglutamate kinase.